The following is a 239-amino-acid chain: Tetrahydromethanopterin S-methyltransferase subunit A (239 aa).

Residues 1–215 (MADKKAPAAG…EAAMIAKFNS (215 aa)) are Cytoplasmic-facing. Residue His-85 coordinates 5-hydroxybenzimidazolylcob(I)amide. Residues 216–238 (GYYNGKIQGIAIGLFLSIVIFSL) form a helical membrane-spanning segment. A topological domain (extracellular) is located at residue Leu-239.

Belongs to the MtrA family. In terms of assembly, the complex is composed of 8 subunits; MtrA, MtrB, MtrC, MtrD, MtrE, MtrF, MtrG and MtrH. The cofactor is 5-hydroxybenzimidazolylcob(I)amide.

The protein resides in the cell membrane. The catalysed reaction is 5-methyl-5,6,7,8-tetrahydromethanopterin + coenzyme M + 2 Na(+)(in) = 5,6,7,8-tetrahydromethanopterin + methyl-coenzyme M + 2 Na(+)(out). The protein operates within one-carbon metabolism; methanogenesis from CO(2); methyl-coenzyme M from 5,10-methylene-5,6,7,8-tetrahydromethanopterin: step 2/2. Part of a complex that catalyzes the formation of methyl-coenzyme M and tetrahydromethanopterin from coenzyme M and methyl-tetrahydromethanopterin. This is an energy-conserving, sodium-ion translocating step. This chain is Tetrahydromethanopterin S-methyltransferase subunit A, found in Methanococcus maripaludis (strain DSM 14266 / JCM 13030 / NBRC 101832 / S2 / LL).